We begin with the raw amino-acid sequence, 495 residues long: Phage-like element PBSX protein XkdE (495 aa).

Belongs to the phage portal family. PBSX subfamily.

The polypeptide is Phage-like element PBSX protein XkdE (xkdE) (Bacillus subtilis (strain 168)).